Here is a 595-residue protein sequence, read N- to C-terminus: Guanylate-binding protein 3 (595 aa).

Residues 1 to 309 form a GTPase domain (Globular) region; it reads MAPEIHMTGP…NAISRGDLPC (309 aa). Residues 35–276 enclose the GB1/RHD3-type G domain; that stretch reads TQPVVVVAIV…FCSYIFSNSK (242 aa). Residues 45–52, 67–69, and 97–101 contribute to the GTP site; these read GLYRTGKS, LGS, and DTEGL. Residues 482–595 adopt a coiled-coil conformation; it reads EKEKEIEVEC…KRYMSHKLKI (114 aa).

Belongs to the TRAFAC class dynamin-like GTPase superfamily. GB1/RHD3 GTPase family. GB1 subfamily. Heterodimer with other family members, including GBP1, GBP2 and GBP5. Dimerization regulates subcellular location.

The protein resides in the cytoplasm. It is found in the perinuclear region. The protein localises to the golgi apparatus membrane. It catalyses the reaction GTP + H2O = GDP + phosphate + H(+). Functionally, interferon (IFN)-inducible GTPase that plays important roles in innate immunity against a diverse range of bacterial, viral and protozoan pathogens. Hydrolyzes GTP very efficiently; GDP rather than GMP is the major reaction product. Following infection, recruited to the pathogen-containing vacuoles or vacuole-escaped bacteria and acts as a positive regulator of inflammasome assembly by promoting the release of inflammasome ligands from bacteria. Acts by promoting lysis of pathogen-containing vacuoles, releasing pathogens into the cytosol. Following pathogen release in the cytosol, promotes recruitment of proteins that mediate bacterial cytolysis: this liberates ligands that are detected by inflammasomes, such as lipopolysaccharide (LPS) that activates the non-canonical CASP4/CASP11 inflammasome or double-stranded DNA (dsDNA) that activates the AIM2 inflammasome. Exhibits antiviral activity against influenza virus. Shows the most prominent antiviral activity in epithelial cells. This is Guanylate-binding protein 3 (GBP3) from Homo sapiens (Human).